The chain runs to 376 residues: Proteasome-interacting protein CIC1 (376 aa).

Disordered regions lie at residues 1-29 and 356-376; these read MAKK…KKSS and RSSS…KAKS. The required for interaction with CDC4 stretch occupies residues 310–376; that stretch reads ETHEDDMVTI…ESEAVKKAKS (67 aa). Basic and acidic residues predominate over residues 357-376; it reads SSSELEKESSESEAVKKAKS.

In terms of assembly, interacts with CDC4, PRE4, PRE6, RPT1 and SCL1 as part of the fully assembled 26S proteasome. Interacts with pre-ribosomal particles constituent NOP7.

Its subcellular location is the nucleus. It is found in the nucleolus. Functionally, an adapter protein that specifically links the 26S proteasome to its substrate CDC4 which is one of the substrate recognition subunits of the SCF E3 ubiquitin ligase complex. Required for turnover of cell cycle regulatory proteins CDC4 and GRR1. Required for synthesis and nuclear export of 60S ribosomal subunits. Required for vegetative growth. The sequence is that of Proteasome-interacting protein CIC1 (CIC1) from Saccharomyces cerevisiae (strain ATCC 204508 / S288c) (Baker's yeast).